Consider the following 658-residue polypeptide: Translation factor GUF1, mitochondrial (658 aa).

One can recognise a tr-type G domain in the interval 45-231 (ENYRNFSIVA…AVIDRIPPPT (187 aa)). Residues 54–61 (AHIDHGKS), 123–127 (DTPGH), and 177–180 (NKID) each bind GTP.

Belongs to the TRAFAC class translation factor GTPase superfamily. Classic translation factor GTPase family. LepA subfamily.

The protein resides in the mitochondrion inner membrane. The catalysed reaction is GTP + H2O = GDP + phosphate + H(+). In terms of biological role, promotes mitochondrial protein synthesis. May act as a fidelity factor of the translation reaction, by catalyzing a one-codon backward translocation of tRNAs on improperly translocated ribosomes. Binds to mitochondrial ribosomes in a GTP-dependent manner. The polypeptide is Translation factor GUF1, mitochondrial (Vanderwaltozyma polyspora (strain ATCC 22028 / DSM 70294 / BCRC 21397 / CBS 2163 / NBRC 10782 / NRRL Y-8283 / UCD 57-17) (Kluyveromyces polysporus)).